Consider the following 92-residue polypeptide: Small ribosomal subunit protein uS19 (92 aa).

The protein belongs to the universal ribosomal protein uS19 family.

In terms of biological role, protein S19 forms a complex with S13 that binds strongly to the 16S ribosomal RNA. This chain is Small ribosomal subunit protein uS19, found in Ruegeria pomeroyi (strain ATCC 700808 / DSM 15171 / DSS-3) (Silicibacter pomeroyi).